The following is a 303-amino-acid chain: MIKQRTLKNIIRATGVGLHSGEKVYLTLKPAPVDTGIVFRRADLDPVVEIPARAANVGETTMSTTLVNGDVKVDTVEHLLSAMAGLGIDNAYVELSASEVPIMDGSAGPFVFLIQSAGLEEQDAAKKFIRILREVTVEDGDKRATFVPFEGFKVSFEIDFDHPVFRDRTQSASVDFSSTSFVKEVSRARTFGFMSDIEYLRKHNLALGGSVENAIVVDADGVLNEDGLRYEDEFVKHKILDAIGDLYLLGNSLIGEFKGFKSGHALNNQLLRKLIEQKDAWEVVTFEDASTAPISYMRPVAAV.

Zn(2+) contacts are provided by H78, H237, and D241. The active-site Proton donor is the H264.

Belongs to the LpxC family. It depends on Zn(2+) as a cofactor.

The enzyme catalyses a UDP-3-O-[(3R)-3-hydroxyacyl]-N-acetyl-alpha-D-glucosamine + H2O = a UDP-3-O-[(3R)-3-hydroxyacyl]-alpha-D-glucosamine + acetate. It participates in glycolipid biosynthesis; lipid IV(A) biosynthesis; lipid IV(A) from (3R)-3-hydroxytetradecanoyl-[acyl-carrier-protein] and UDP-N-acetyl-alpha-D-glucosamine: step 2/6. Functionally, catalyzes the hydrolysis of UDP-3-O-myristoyl-N-acetylglucosamine to form UDP-3-O-myristoylglucosamine and acetate, the committed step in lipid A biosynthesis. This Pseudomonas fluorescens (strain Pf0-1) protein is UDP-3-O-acyl-N-acetylglucosamine deacetylase.